The primary structure comprises 267 residues: PF03932 family protein CutC (267 aa).

It belongs to the CutC family.

The protein localises to the cytoplasm. The chain is PF03932 family protein CutC from Xylella fastidiosa (strain Temecula1 / ATCC 700964).